We begin with the raw amino-acid sequence, 404 residues long: GTPase Obg (404 aa).

The Obg domain occupies 1-159; that stretch reads MKFIDEARIE…RALRLELKVL (159 aa). The segment at 22–43 is disordered; that stretch reads SFRREKFIPRGGPDGGDGGRGG. Gly residues predominate over residues 33–43; that stretch reads GPDGGDGGRGG. In terms of domain architecture, OBG-type G spans 160–334; the sequence is ADVGLLGMPN…LVFAIQDFLD (175 aa). Residues 166–173, 191–195, 213–216, 284–287, and 315–317 contribute to the GTP site; these read GMPNAGKS, FTTLA, DIPG, NKLD, and SAL. The Mg(2+) site is built by Ser173 and Thr193. Positions 373–404 are disordered; the sequence is LLAEGETGTGDDGRDGNENDPADEQDTNRPNH.

It belongs to the TRAFAC class OBG-HflX-like GTPase superfamily. OBG GTPase family. As to quaternary structure, monomer. Mg(2+) is required as a cofactor.

It is found in the cytoplasm. Functionally, an essential GTPase which binds GTP, GDP and possibly (p)ppGpp with moderate affinity, with high nucleotide exchange rates and a fairly low GTP hydrolysis rate. Plays a role in control of the cell cycle, stress response, ribosome biogenesis and in those bacteria that undergo differentiation, in morphogenesis control. The protein is GTPase Obg of Aromatoleum aromaticum (strain DSM 19018 / LMG 30748 / EbN1) (Azoarcus sp. (strain EbN1)).